The primary structure comprises 71 residues: UPF0346 protein SUB0487 (71 aa).

This sequence belongs to the UPF0346 family.

The chain is UPF0346 protein SUB0487 from Streptococcus uberis (strain ATCC BAA-854 / 0140J).